Reading from the N-terminus, the 161-residue chain is Large ribosomal subunit protein uL10 (161 aa).

It belongs to the universal ribosomal protein uL10 family. In terms of assembly, part of the ribosomal stalk of the 50S ribosomal subunit. The N-terminus interacts with L11 and the large rRNA to form the base of the stalk. The C-terminus forms an elongated spine to which L12 dimers bind in a sequential fashion forming a multimeric L10(L12)X complex.

Forms part of the ribosomal stalk, playing a central role in the interaction of the ribosome with GTP-bound translation factors. The polypeptide is Large ribosomal subunit protein uL10 (Campylobacter curvus (strain 525.92)).